The primary structure comprises 355 residues: Tetraacyldisaccharide 4'-kinase (355 aa).

Residue 48–55 (SVGGTGKT) participates in ATP binding.

Belongs to the LpxK family.

It catalyses the reaction a lipid A disaccharide + ATP = a lipid IVA + ADP + H(+). The protein operates within glycolipid biosynthesis; lipid IV(A) biosynthesis; lipid IV(A) from (3R)-3-hydroxytetradecanoyl-[acyl-carrier-protein] and UDP-N-acetyl-alpha-D-glucosamine: step 6/6. In terms of biological role, transfers the gamma-phosphate of ATP to the 4'-position of a tetraacyldisaccharide 1-phosphate intermediate (termed DS-1-P) to form tetraacyldisaccharide 1,4'-bis-phosphate (lipid IVA). In Pelodictyon phaeoclathratiforme (strain DSM 5477 / BU-1), this protein is Tetraacyldisaccharide 4'-kinase.